The sequence spans 457 residues: Tubulin alpha chain (457 aa).

Residues Gln12, Glu77, Ser146, Gly150, Thr151, Thr186, Asn213, and Asn235 each contribute to the GTP site. Residue Glu77 coordinates Mg(2+).

Belongs to the tubulin family. Dimer of alpha and beta chains. A typical microtubule is a hollow water-filled tube with an outer diameter of 25 nm and an inner diameter of 15 nM. Alpha-beta heterodimers associate head-to-tail to form protofilaments running lengthwise along the microtubule wall with the beta-tubulin subunit facing the microtubule plus end conferring a structural polarity. Microtubules usually have 13 protofilaments but different protofilament numbers can be found in some organisms and specialized cells. Requires Mg(2+) as cofactor. Post-translationally, undergoes a tyrosination/detyrosination cycle, the cyclic removal and re-addition of a C-terminal tyrosine residue by the enzymes tubulin tyrosine carboxypeptidase (TTCP) and tubulin tyrosine ligase (TTL), respectively.

The protein resides in the cytoplasm. It is found in the cytoskeleton. It catalyses the reaction GTP + H2O = GDP + phosphate + H(+). In terms of biological role, tubulin is the major constituent of microtubules, a cylinder consisting of laterally associated linear protofilaments composed of alpha- and beta-tubulin heterodimers. Microtubules grow by the addition of GTP-tubulin dimers to the microtubule end, where a stabilizing cap forms. Below the cap, tubulin dimers are in GDP-bound state, owing to GTPase activity of alpha-tubulin. The sequence is that of Tubulin alpha chain (tubA) from Dictyostelium discoideum (Social amoeba).